We begin with the raw amino-acid sequence, 1001 residues long: Ulvan lyase, long isoform (1001 aa).

The signal sequence occupies residues 1–21 (MNGLKMLLFSTTLLTAFTLHA). 126–127 (SH) serves as a coordination point for substrate. Catalysis depends on His127, which acts as the Proton donor/acceptor. 3 residues coordinate Ca(2+): Asp189, Asp199, and Lys201. Substrate-binding residues include Tyr280 and Arg297. Positions 300, 303, and 305 each coordinate Ca(2+). Tyr361 is a binding site for substrate.

This sequence belongs to the polysaccharide lyase 24 family.

Ulvan lyase involved in ulvan degradation. Ulvan is the main polysaccharide component of the Ulvales (green seaweed) cell wall. It is composed of disaccharide building blocks comprising 3-sulfated rhamnose (Rha3S) linked to D-glucuronic acid (GlcA), L-iduronic acid (IduA), or D-xylose (Xyl). Ulvan lyase catalyzes preferentially the endolytic cleavage of the glycosidic bond between Rha3S and the uronic acid GlcA, but not IduA, producing oligosaccharides that have unsaturated 4-deoxy-L-threo-hex-4-enopyranosiduronic acid (deltaUA) at the non-reducing end. The most abundant end products in the degradation of the ulvan polysaccharide were deltaUA-Rha3S disaccharides and deltaUA-Rha3S-IduA-Rha3S and deltaUA-Rha3S-Xyl-Rha3S tetrasaccharides. The chain is Ulvan lyase, long isoform from Pseudoalteromonas sp. (strain PLSV).